We begin with the raw amino-acid sequence, 375 residues long: uncharacterized protein (375 aa).

An N-terminal signal peptide occupies residues 1-20; sequence MKNKLFIILIIFIILKIVIC. The Extracellular portion of the chain corresponds to 21–335; it reads QNTTPSKLIP…EKQVERKITP (315 aa). Over residues 30–42 the composition is skewed to low complexity; that stretch reads PQQQQKQKQQQTQ. 2 disordered regions span residues 30–74 and 113–253; these read PQQQ…QPQQ and SQNV…PHNH. A compositionally biased stretch (basic residues) spans 43–53; that stretch reads PHHHHHHHQQH. The segment covering 54-74 has biased composition (low complexity); that stretch reads QQHQQQHQPNQQIKQQQQPQQ. Basic residues predominate over residues 120–151; it reads PPHHTQQRVPHHHGPNGAPHHHGPNGAPHHHG. Positions 168-180 are enriched in polar residues; the sequence is GHNTQGHVQTNHV. Residues 181-220 show a composition bias toward low complexity; it reads NNINKNNINNNNNNNNNNNNNNNNNNNNNINDNKNIRNNI. A helical membrane pass occupies residues 336–356; it reads IMVLYILLASTMVIQLFIMVF. Residues 357–375 are Cytoplasmic-facing; the sequence is KQVKHIREINAKTTMESLL.

Its subcellular location is the membrane. This is an uncharacterized protein from Dictyostelium discoideum (Social amoeba).